Here is a 216-residue protein sequence, read N- to C-terminus: Adenylate kinase (216 aa).

10-15 (GAGKGT) is an ATP binding site. The NMP stretch occupies residues 30-59 (STGDMLRAAVKAGTKLGQQVQGIMAAGKLV). Residues Thr31, Arg36, 57 to 59 (KLV), 85 to 88 (GFPR), and Gln92 each bind AMP. The tract at residues 122–159 (GRRVHMPSGRIYHLKFNPPKITDKDDMTGESLTLRKDD) is LID. ATP contacts are provided by residues Arg123 and 132-133 (IY). Arg156 and Arg167 together coordinate AMP. Arg200 is an ATP binding site.

Belongs to the adenylate kinase family. Monomer.

The protein localises to the cytoplasm. It carries out the reaction AMP + ATP = 2 ADP. The protein operates within purine metabolism; AMP biosynthesis via salvage pathway; AMP from ADP: step 1/1. Functionally, catalyzes the reversible transfer of the terminal phosphate group between ATP and AMP. Plays an important role in cellular energy homeostasis and in adenine nucleotide metabolism. The chain is Adenylate kinase from Hamiltonella defensa subsp. Acyrthosiphon pisum (strain 5AT).